A 415-amino-acid chain; its full sequence is Arrestin domain-containing protein 4 (415 aa).

2 short sequence motifs (PPxY motif) span residues 347–350 and 392–395; these read PPNY and PPLY.

Belongs to the arrestin family. In terms of assembly, interacts with ADRB2. Interacts (via PPxY motifs) with ITCH, NEDD4L and WWP2. Interacts with AVPR2. Identified in a complex containing at least ARRDC4, AVPR2 and HGS. Interacts with SLC11A2; controls the incorporation of SLC11A2 into extracellular vesicles through an ubiquitination-dependent mechanism. Interacts with TRIM65.

Its subcellular location is the early endosome. It localises to the cell membrane. The protein localises to the cytoplasmic vesicle. Its function is as follows. Functions as an adapter recruiting ubiquitin-protein ligases to their specific substrates. Plays a role in endocytosis of activated G protein-coupled receptors (GPCRs). Through an ubiquitination-dependent mechanism also plays a role in the incorporation of SLC11A2 into extracellular vesicles. May play a role in glucose uptake. Participates in innate immune response by promoting IFIH1/MDA5 activation through interaction with TRIM65. In Mus musculus (Mouse), this protein is Arrestin domain-containing protein 4.